The sequence spans 685 residues: Frizzled-8 (685 aa).

Positions 1-27 (MEWGYLLEVTSLLAALAVLQRSSGAAA) are cleaved as a signal peptide. Residues 28-272 (ASAKELACQE…NPFFSQDERA (245 aa)) are Extracellular-facing. Positions 30–151 (AKELACQEIT…GNPDTLCMDY (122 aa)) constitute an FZ domain. Cystine bridges form between C35-C96, C43-C89, C80-C118, C107-C148, and C111-C135. N-linked (GlcNAc...) asparagine glycosylation is present at N49. Position 71–78 (71–78 (QFWPLVEI)) interacts with hexadecanoate. The segment at 95–100 (ICLEDY) is wnt-binding. Positions 147 to 152 (LCMDYN) are wnt-binding. N152 carries an N-linked (GlcNAc...) asparagine glycan. The tract at residues 155–223 (DLTTAAPSPP…KARPPGGGAA (69 aa)) is disordered. The span at 161-176 (PSPPRRLPPPPPPGEQ) shows a compositional bias: pro residues. Composition is skewed to low complexity over residues 177-187 (PPSGSGHSRPP) and 200-223 (GSGD…GGAA). Residues 273–293 (FTVFWIGLWSVLCFVSTFATV) form a helical membrane-spanning segment. Over 294–309 (STFLIDMERFKYPERP) the chain is Cytoplasmic. The helical transmembrane segment at 310–330 (IIFLSACYLFVSVGYLVRLVA) threads the bilayer. At 331–394 (GHEKVACSGG…RYETTGPALC (64 aa)) the chain is on the extracellular side. The chain crosses the membrane as a helical span at residues 395-415 (TVVFLLVYFFGMASSIWWVIL). The Cytoplasmic segment spans residues 416-437 (SLTWFLAAGMKWGNEAIAGYSQ). Residues 438–458 (YFHLAAWLVPSVKSIAVLALS) traverse the membrane as a helical segment. Residues 459–481 (SVDGDPVAGICYVGNQSLDNLRG) are Extracellular-facing. N-linked (GlcNAc...) asparagine glycosylation is present at N473. A helical transmembrane segment spans residues 482-502 (FVLAPLVIYLFIGTMFLLAGF). Topologically, residues 503–530 (VSLFRIRSVIKQQGGPTKTHKLEKLMIR) are cytoplasmic. The helical transmembrane segment at 531–551 (LGLFTVLYTVPAAVVVACLFY) threads the bilayer. Residues 552–582 (EQHNRPRWEATHNCPCLRDLQPDQARRPDYA) lie on the Extracellular side of the membrane. A helical transmembrane segment spans residues 583–603 (VFMLKYFMCLVVGITSGVWVW). Topologically, residues 604 to 685 (SGKTLESWRA…YPKQMPLSQV (82 aa)) are cytoplasmic. Residues 606–611 (KTLESW) carry the Lys-Thr-X-X-X-Trp motif, mediates interaction with the PDZ domain of Dvl family members motif. Residues 631-655 (AGGSGPGGSGPGPGGGGGHGGGGGS) show a composition bias toward gly residues. Positions 631–656 (AGGSGPGGSGPGPGGGGGHGGGGGSL) are disordered. Residues 683–685 (SQV) carry the PDZ-binding motif.

Belongs to the G-protein coupled receptor Fz/Smo family. As to quaternary structure, component of a Wnt-signaling complex that contains a WNT protein, a FZD protein and LRP5 or LRP6. Interacts directly with LRP5 or LRP6; the interaction is promoted by Wnt-binding and signaling and inhibited by DKK1. Interacts (via the PDZ-binding motif) with GPOC (via its PDZ domain). Interacts with RSPO1 and RSPO3. Interacts with glypican GPC3. Post-translationally, ubiquitinated by ZNRF3, leading to its degradation by the proteasome. Expressed in chondrocytes.

The protein localises to the membrane. Its subcellular location is the golgi apparatus. The protein resides in the cell membrane. Functionally, receptor for Wnt proteins. Component of the Wnt-Fzd-LRP5-LRP6 complex that triggers beta-catenin signaling through inducing aggregation of receptor-ligand complexes into ribosome-sized signalosomes. The beta-catenin canonical signaling pathway leads to the activation of disheveled proteins, inhibition of GSK-3 kinase, nuclear accumulation of beta-catenin and activation of Wnt target genes. A second signaling pathway involving PKC and calcium fluxes has been seen for some family members, but it is not yet clear if it represents a distinct pathway or if it can be integrated in the canonical pathway, as PKC seems to be required for Wnt-mediated inactivation of GSK-3 kinase. Both pathways seem to involve interactions with G-proteins. May be involved in transduction and intercellular transmission of polarity information during tissue morphogenesis and/or in differentiated tissues. Coreceptor along with RYK of Wnt proteins, such as WNT1. This is Frizzled-8 (Fzd8) from Mus musculus (Mouse).